The following is a 210-amino-acid chain: Large ribosomal subunit protein uL3 (210 aa).

The disordered stretch occupies residues 125–151 (RHGQSRGPMSHGSRYHRRPGSMGPVAP).

It belongs to the universal ribosomal protein uL3 family. Part of the 50S ribosomal subunit. Forms a cluster with proteins L14 and L19.

One of the primary rRNA binding proteins, it binds directly near the 3'-end of the 23S rRNA, where it nucleates assembly of the 50S subunit. This chain is Large ribosomal subunit protein uL3, found in Bacillus mycoides (strain KBAB4) (Bacillus weihenstephanensis).